The primary structure comprises 353 residues: DNA integrity scanning protein DisA (353 aa).

Residues 6 to 144 enclose the DAC domain; it reads DKELMNILKI…GGIKYVLRDS (139 aa). Residues Gly-73, Leu-91, and 104–108 contribute to the ATP site; that span reads TRHRT.

The protein belongs to the DisA family. Homooctamer. It depends on Mg(2+) as a cofactor.

It catalyses the reaction 2 ATP = 3',3'-c-di-AMP + 2 diphosphate. Participates in a DNA-damage check-point that is active prior to asymmetric division when DNA is damaged. DisA forms globular foci that rapidly scan along the chromosomes during sporulation, searching for lesions. When a lesion is present, DisA pauses at the lesion site. This triggers a cellular response that culminates in a temporary block in sporulation initiation. Its function is as follows. Also has diadenylate cyclase activity, catalyzing the condensation of 2 ATP molecules into cyclic di-AMP (c-di-AMP). c-di-AMP acts as a signaling molecule that couples DNA integrity with progression of sporulation. The rise in c-di-AMP level generated by DisA while scanning the chromosome, operates as a positive signal that advances sporulation; upon encountering a lesion, the DisA focus arrests at the damaged site and halts c-di-AMP synthesis. The sequence is that of DNA integrity scanning protein DisA from Clostridium botulinum (strain Okra / Type B1).